The primary structure comprises 1121 residues: Anillin (1121 aa).

The residue at position 1 (Met-1) is an N-acetylmethionine. Basic and acidic residues predominate over residues 1–25 (MDPFTEKLLERTRARRENLQRKMAE). The required for ubiquitination stretch occupies residues 1 to 45 (MDPFTEKLLERTRARRENLQRKMAERPTAVARSAPHAKRGREPLS). 3 disordered regions span residues 1–113 (MDPF…AAIS), 125–196 (ADRG…PVGR), and 212–402 (DDVS…TKAI). Residues 1–154 (MDPFTEKLLE…MQRLAEQRRH (154 aa)) form an interaction with CD2AP region. Positions 1–228 (MDPFTEKLLE…AKQNSVQEQP (228 aa)) are nuclear localization. 2 positions are modified to phosphoserine: Ser-73 and Ser-96. Residues 96–109 (SPMPAPRQAKPPAP) are compositionally biased toward pro residues. Residues 130–143 (NSGSEASATSSVKT) are compositionally biased toward polar residues. The segment covering 147–157 (RLAEQRRHWDS) has biased composition (basic and acidic residues). Ser-180 is subject to Phosphoserine. The residue at position 192 (Thr-192) is a Phosphothreonine. The segment covering 216-228 (HSSAKQNSVQEQP) has biased composition (polar residues). Ser-223, Ser-250, and Ser-259 each carry phosphoserine. Residues 229-671 (GTACLSKSSS…RDLLYSIDAY (443 aa)) are interaction with F-actin. Residues 234 to 250 (SKSSSASGASASINSSS) are compositionally biased toward low complexity. Positions 282-298 (SASVSSSVKASSPVTAA) are enriched in low complexity. The segment covering 303–314 (ENREAQNPELLH) has biased composition (basic and acidic residues). Phosphothreonine is present on Thr-316. A phosphoserine mark is found at Ser-318 and Ser-334. Residue Thr-359 is modified to Phosphothreonine. Lys-366 is modified (N6-acetyllysine). Over residues 368–384 (FLERFGERCQEHSKESP) the composition is skewed to basic and acidic residues. Polar residues predominate over residues 391 to 401 (KTPNITPNTKA). A phosphothreonine mark is found at Thr-392 and Thr-396. Residues Ser-414 and Ser-444 each carry the phosphoserine modification. The disordered stretch occupies residues 490 to 511 (NEPAVKLSSTEPAGSTESEMTK). Residues 496–511 (LSSTEPAGSTESEMTK) show a composition bias toward polar residues. 3 positions are modified to phosphoserine: Ser-513, Ser-548, and Ser-556. Positions 564-599 (FSDVLEEGELDVEKSQEEMDQVGAENSEEQEDALNI) form a coiled coil. The span at 623–635 (SPPSELRDSNLSA) shows a compositional bias: polar residues. Positions 623–656 (SPPSELRDSNLSAASPKPGKFQRTRVPRAESADS) are disordered. Residues Ser-637, Ser-653, Ser-656, and Ser-659 each carry the phosphoserine modification. Tyr-666 is subject to Phosphotyrosine. Ser-673, Ser-683, Ser-787, and Ser-924 each carry phosphoserine. The tract at residues 725 to 1121 (QQTVIYQASQ…DACYKPVGKP (397 aa)) is localization to the cleavage furrow. Residues 980-1104 (AVEEKGFLTI…WMQKLNQVIV (125 aa)) enclose the PH domain.

In terms of assembly, interacts with F-actin. Interacts with CD2AP. May interact with RHOA. Interacts with FZR1/CDH1 during mitotic exit. Post-translationally, phosphorylated during mitosis. In terms of processing, ubiquitinated, and this requires FZR1/CDH1.

The protein resides in the nucleus. The protein localises to the cytoplasm. Its subcellular location is the cytoskeleton. It is found in the cell cortex. It localises to the cell projection. The protein resides in the bleb. In terms of biological role, required for cytokinesis. Essential for the structural integrity of the cleavage furrow and for completion of cleavage furrow ingression. Plays a role in bleb assembly during metaphase and anaphase of mitosis. May play a significant role in podocyte cell migration. The sequence is that of Anillin (Anln) from Mus musculus (Mouse).